Consider the following 739-residue polypeptide: DNA ligase (739 aa).

34–38 (DADYD) contributes to the NAD(+) binding site. The span at 49-59 (ARFPHLKRPDS) shows a compositional bias: basic and acidic residues. The segment at 49–70 (ARFPHLKRPDSPSEQVGARPGE) is disordered. Residues 83–84 (SL) and E117 each bind NAD(+). K119 (N6-AMP-lysine intermediate) is an active-site residue. NAD(+)-binding residues include R140, E175, K291, and K315. The Zn(2+) site is built by C420, C423, C438, and C444. A BRCT domain is found at 660-739 (ARDSPVAGKT…DGWLKLIEGL (80 aa)).

Belongs to the NAD-dependent DNA ligase family. LigA subfamily. Mg(2+) serves as cofactor. Mn(2+) is required as a cofactor.

The enzyme catalyses NAD(+) + (deoxyribonucleotide)n-3'-hydroxyl + 5'-phospho-(deoxyribonucleotide)m = (deoxyribonucleotide)n+m + AMP + beta-nicotinamide D-nucleotide.. Functionally, DNA ligase that catalyzes the formation of phosphodiester linkages between 5'-phosphoryl and 3'-hydroxyl groups in double-stranded DNA using NAD as a coenzyme and as the energy source for the reaction. It is essential for DNA replication and repair of damaged DNA. This is DNA ligase from Ruegeria pomeroyi (strain ATCC 700808 / DSM 15171 / DSS-3) (Silicibacter pomeroyi).